The sequence spans 450 residues: Aspartyl/glutamyl-tRNA(Asn/Gln) amidotransferase subunit B (450 aa).

The protein belongs to the GatB/GatE family. GatB subfamily. In terms of assembly, heterotrimer of A, B and C subunits.

The enzyme catalyses L-glutamyl-tRNA(Gln) + L-glutamine + ATP + H2O = L-glutaminyl-tRNA(Gln) + L-glutamate + ADP + phosphate + H(+). It catalyses the reaction L-aspartyl-tRNA(Asn) + L-glutamine + ATP + H2O = L-asparaginyl-tRNA(Asn) + L-glutamate + ADP + phosphate + 2 H(+). Its function is as follows. Allows the formation of correctly charged Asn-tRNA(Asn) or Gln-tRNA(Gln) through the transamidation of misacylated Asp-tRNA(Asn) or Glu-tRNA(Gln) in organisms which lack either or both of asparaginyl-tRNA or glutaminyl-tRNA synthetases. The reaction takes place in the presence of glutamine and ATP through an activated phospho-Asp-tRNA(Asn) or phospho-Glu-tRNA(Gln). The protein is Aspartyl/glutamyl-tRNA(Asn/Gln) amidotransferase subunit B of Methanobrevibacter smithii (strain ATCC 35061 / DSM 861 / OCM 144 / PS).